We begin with the raw amino-acid sequence, 151 residues long: Acidic phospholipase A2 2 (151 aa).

An N-terminal signal peptide occupies residues 1 to 27 (MYPAHLLVLLAVCVSLLGAASIPARPL). Disulfide bonds link cysteine 38–cysteine 104, cysteine 54–cysteine 151, cysteine 56–cysteine 72, cysteine 71–cysteine 132, cysteine 78–cysteine 125, cysteine 88–cysteine 118, and cysteine 111–cysteine 123. The Ca(2+) site is built by tyrosine 55, glycine 57, and glycine 59. Residue histidine 75 is part of the active site. Aspartate 76 contributes to the Ca(2+) binding site. The active site involves aspartate 126.

The protein belongs to the phospholipase A2 family. Group I subfamily. D49 sub-subfamily. It depends on Ca(2+) as a cofactor. Expressed by the venom gland.

The protein resides in the secreted. The enzyme catalyses a 1,2-diacyl-sn-glycero-3-phosphocholine + H2O = a 1-acyl-sn-glycero-3-phosphocholine + a fatty acid + H(+). Its function is as follows. PLA2 catalyzes the calcium-dependent hydrolysis of the 2-acyl groups in 3-sn-phosphoglycerides. The protein is Acidic phospholipase A2 2 of Tropidechis carinatus (Australian rough-scaled snake).